Consider the following 62-residue polypeptide: uncharacterized protein (62 aa).

A helical transmembrane segment spans residues 15–37 (FSSGVLISNFLLFNFIIISHSSL). Residues 41–56 (TTTTTTTTTTTTNTKS) show a composition bias toward low complexity. The segment at 41–62 (TTTTTTTTTTTTNTKSTLHRSG) is disordered.

It is found in the membrane. This is an uncharacterized protein from Dictyostelium discoideum (Social amoeba).